The sequence spans 119 residues: Autophagy-related protein 8C-like (119 aa).

Gly-117 carries Phosphatidylethanolamine amidated glycine lipidation. A propeptide spans 118 to 119 (removed in mature form); sequence SF.

The protein belongs to the ATG8 family. Interacts with ATG4. Interacts with the Phytophtora infestans effector PexRD54. Interacts with JOKA2. The C-terminal 2 residues are removed by ATG4 to expose Gly-117 at the C-terminus. The C-terminal Gly is then amidated with phosphatidylethanolamine by an activating system similar to that for ubiquitin. The phosphatidylethanolamine amidated glycine is required for autophagosome formation.

The protein resides in the cytoplasmic vesicle. It is found in the autophagosome membrane. Its subcellular location is the vacuole membrane. It localises to the cytoplasm. The protein localises to the cytoskeleton. Functionally, ubiquitin-like modifier involved in autophagosomes formation. May mediate the delivery of the autophagosomes to the vacuole via the microtubule cytoskeleton. ATG8CL-mediated selective autophagy contributes to defense against the fungal pathogen Phytophtora infestans. In Solanum tuberosum (Potato), this protein is Autophagy-related protein 8C-like.